We begin with the raw amino-acid sequence, 688 residues long: MARQYPLEKFRNFGIMAHIDAGKTTTTERILFYTGRNHKIGETHDGASTMDWMAQEQERGITITSAATTCFWKGYELNIIDTPGHVDFTVEVERSLRVLDGAVTVLDAKSGVEPQTETVWRQADKYGVPRMIYVNKMDATGADYYNCINTVRERLQANAVAIQIPIGQEDQFQGMVDLLTNQAIIFKDDLGKDIEVGEVPADLADKAEEYRAAMIEAIAETDEELMMKYLEGEELTLEELKVALRKATINNEIIPVICGSSYKNKGVQQMIDGVVDYLPSPLDIPAVKGTNLDGEEEVREASDDAPMSALAFKIATDPFVGRLAFTRVYSGVLESGSYVLNSTKGKKERIGRLVKMHANSREEVESLEAAELGAVIGLKNTTTGDTLCTEAAPIILEKMEFPEPVISIAIEPKTKAGQEKMGIALSKLAEEDPTFKTWTDQETGQTIIAGMGELHLDIIVDRLQREFKVECNVGAPQVAYKETIKKAVEAEAKFARQSGGRGQYGHCKIEMIPTEGEYEFENAIVGGAIPREYIPAVDNGIREAAESGIIAGYPVINFKIRLFDGSYHDVDSSEMAFKIAGSMAFKNAMAKADAVLLEPIMKVEITVPEEYMGDVIGDVNSRRGRMEGMDSRNGAQIIRAFIPLSEMFGYATALRSRTQGRGTYAMEFDHYDDVPKSIQEEVAGKKNK.

The region spanning glutamate 8–leucine 282 is the tr-type G domain. GTP-binding positions include alanine 17–threonine 24, aspartate 81–histidine 85, and asparagine 135–aspartate 138.

It belongs to the TRAFAC class translation factor GTPase superfamily. Classic translation factor GTPase family. EF-G/EF-2 subfamily.

The protein localises to the cytoplasm. In terms of biological role, catalyzes the GTP-dependent ribosomal translocation step during translation elongation. During this step, the ribosome changes from the pre-translocational (PRE) to the post-translocational (POST) state as the newly formed A-site-bound peptidyl-tRNA and P-site-bound deacylated tRNA move to the P and E sites, respectively. Catalyzes the coordinated movement of the two tRNA molecules, the mRNA and conformational changes in the ribosome. This chain is Elongation factor G, found in Clostridium perfringens (strain 13 / Type A).